The primary structure comprises 401 residues: Probable E3 ubiquitin-protein ligase RHC2A (401 aa).

The interval 41 to 93 (TPSDSFTTTTTTQHRSPTRFPPPSSSSSTPSASMHADNSPTPTIVTRTRSNRS) is disordered. Over residues 76–93 (ADNSPTPTIVTRTRSNRS) the composition is skewed to polar residues. Residues 201–242 (CAVCKENFVLKSSAREMPCNHIYHPDCILPWLAIRNSCPVCR) form an RING-type; atypical zinc finger.

The catalysed reaction is S-ubiquitinyl-[E2 ubiquitin-conjugating enzyme]-L-cysteine + [acceptor protein]-L-lysine = [E2 ubiquitin-conjugating enzyme]-L-cysteine + N(6)-ubiquitinyl-[acceptor protein]-L-lysine.. It participates in protein modification; protein ubiquitination. In terms of biological role, probable E3 ubiquitin-protein ligase that may possess E3 ubiquitin ligase activity in vitro. In Arabidopsis thaliana (Mouse-ear cress), this protein is Probable E3 ubiquitin-protein ligase RHC2A.